A 120-amino-acid polypeptide reads, in one-letter code: SAGA-associated factor 11 (120 aa).

Low complexity predominate over residues 40–60; the sequence is SLLNSSNSNTNSNTNGTIASN. The disordered stretch occupies residues 40 to 82; it reads SLLNSSNSNTNSNTNGTIASNGGNGTTSDENNEIENSTIQDKS. The segment at 93-114 adopts an SGF11-type zinc-finger fold; that stretch reads FRCLNCGRNIAGGRFASHISKC.

Belongs to the SGF11 family. In terms of assembly, component of the 1.8 MDa SAGA transcription coactivator-HAT complex. SAGA is built of 5 distinct domains with specialized functions. Within the SAGA complex, SUS1, SGF11, SGF73 and UBP8 form an additional subcomplex of SAGA called the DUB module (deubiquitination module). Interacts directly with SGF73, SUS1 and UBP8.

It is found in the nucleus. Its function is as follows. Functions as a component of the transcription regulatory histone acetylation (HAT) complex SAGA. At the promoters, SAGA is required for recruitment of the basal transcription machinery. It influences RNA polymerase II transcriptional activity through different activities such as TBP interaction and promoter selectivity, interaction with transcription activators, and chromatin modification through histone acetylation and deubiquitination. SAGA acetylates nucleosomal histone H3 to some extent (to form H3K9ac, H3K14ac, H3K18ac and H3K23ac). SAGA interacts with DNA via upstream activating sequences (UASs). Involved in transcriptional regulation of a subset of SAGA-regulated genes. Within the SAGA complex, participates in a subcomplex, that specifically deubiquitinates histones H2B. The chain is SAGA-associated factor 11 from Candida albicans (strain SC5314 / ATCC MYA-2876) (Yeast).